We begin with the raw amino-acid sequence, 470 residues long: Dynein axonemal assembly factor 11 (470 aa).

4 LRR repeats span residues 20 to 43 (IFSL…DKWC), 44 to 65 (RELK…VSKL), 66 to 89 (KKLE…GCES), and 90 to 110 (LQKL…NSLQ). In terms of domain architecture, LRRCT spans 128–146 (YEGYRQYVVATLPQLKWLD). Residues 177–288 (LRKRAAEREK…NRSEEELKKK (112 aa)) are a coiled coil. The disordered stretch occupies residues 182 to 265 (AEREKATNNL…SQYTPESRLE (84 aa)). A compositionally biased stretch (basic and acidic residues) spans 194 to 213 (KQKEGRKAQEKKPGFDRRWY). The CS domain maps to 303–395 (VNESKLDFSL…TEMIQTKRAK (93 aa)). A disordered region spans residues 447–470 (HRNSARDTADSEDFIDNAEVPPLV).

It belongs to the tilB family.

The protein resides in the cytoplasm. It localises to the cell projection. The protein localises to the cilium. It is found in the dynein axonemal particle. Its subcellular location is the flagellum. In terms of biological role, involved in dynein arm assembly, is important for expression and transporting outer dynein arm (ODA) proteins from the cytoplasm to the cilia. This Xenopus tropicalis (Western clawed frog) protein is Dynein axonemal assembly factor 11 (dnaaf11).